Here is a 522-residue protein sequence, read N- to C-terminus: Maturase K (522 aa).

The protein belongs to the intron maturase 2 family. MatK subfamily.

It localises to the plastid. The protein localises to the chloroplast. In terms of biological role, usually encoded in the trnK tRNA gene intron. Probably assists in splicing its own and other chloroplast group II introns. This chain is Maturase K, found in Iris sanguinea (Japanese iris).